The primary structure comprises 317 residues: Ribosomal protein L11 methyltransferase (317 aa).

Residues Thr162, Gly183, Asp205, and Asn248 each contribute to the S-adenosyl-L-methionine site.

This sequence belongs to the methyltransferase superfamily. PrmA family.

Its subcellular location is the cytoplasm. It catalyses the reaction L-lysyl-[protein] + 3 S-adenosyl-L-methionine = N(6),N(6),N(6)-trimethyl-L-lysyl-[protein] + 3 S-adenosyl-L-homocysteine + 3 H(+). Its function is as follows. Methylates ribosomal protein L11. The polypeptide is Ribosomal protein L11 methyltransferase (Alkaliphilus metalliredigens (strain QYMF)).